The primary structure comprises 301 residues: MGARQSRASSKDKGPKRMLFTGRRQKFSPWDDALLSGRDPRSLLKRGMHHVSFSLVTRGMTDIPDFLWGLSEVQKLNLSHNQLRVLPPEVGKLTRIVVLNLCGNRLKSLPREVSLLQCLKVLFVNMNCLTEVPAELSLCRKLEVLSLSHNCLSQLPACFADLSRLRKLNLSNNFFAHIPMCVFSLKELIFLHVGSNRLENIAESIQHLASLQIFIAEGNNIHSFPRSLCLVTSLELLNLNNNDIQTLPSELHLLCRLVRIAWNPMDKGLHISHNPLSKPLPELVEGGLEMLFGYLKDKKHT.

LRR repeat units lie at residues 72-93 (EVQK…VGKL), 95-116 (RIVV…VSLL), 118-139 (CLKV…LSLC), 141-163 (KLEV…ADLS), 164-185 (RLRK…VFSL), 187-208 (ELIF…IQHL), 210-231 (SLQI…LCLV), 233-254 (SLEL…LHLL), and 265-287 (MDKG…VEGG).

The protein is Leucine-rich repeat-containing protein 30 (LRRC30) of Homo sapiens (Human).